The sequence spans 425 residues: Inner membrane protein YqcE (425 aa).

Topologically, residues 1–8 (MQHNSYRR) are cytoplasmic. Residues 9 to 29 (WITLAIISFSGGVSFDLAYLR) form a helical membrane-spanning segment. Residues 30 to 48 (YIYQIPMAKFMGFSNTEIG) lie on the Periplasmic side of the membrane. Residues 49–69 (LIMSTFGIAAIILYAPSGVIA) form a helical membrane-spanning segment. Residues 70 to 75 (DKFSHR) are Cytoplasmic-facing. The next 2 helical transmembrane spans lie at 76–96 (KMITSAMIITGLLGLLMATYP) and 97–117 (PLWVMLCIQIAFAITTILMLW). The Cytoplasmic segment spans residues 118 to 138 (SVSIKAASLLGDHSEQGKIMG). The helical transmembrane segment at 139–159 (WMEGLRGVGVMSLAVFTMWVF) threads the bilayer. Topologically, residues 160 to 171 (SRFAPDDSTSLK) are periplasmic. A helical transmembrane segment spans residues 172–192 (TVIIIYSVVYILLGILCWFFV). Topologically, residues 193–219 (SDNNNLRSANNEEKQSFQLSDILAVLR) are cytoplasmic. Residues 220–240 (ISTTWYCSMVIFGVFTIYAIL) traverse the membrane as a helical segment. Residues 241-259 (SYSTNYLTEMYGMSLVAAS) are Periplasmic-facing. A helical membrane pass occupies residues 260-280 (YMGIVINKIFRALCGPLGGII). At 281-291 (TTYSKVKSPTR) the chain is on the cytoplasmic side. Residues 292-312 (VIQILSVLGLLTLTALLVTNS) form a helical membrane-spanning segment. N313 is a topological domain (periplasmic). A helical membrane pass occupies residues 314–334 (PQSVAMGIGLILLLGFTCYAS). Topologically, residues 335 to 354 (RGLYWACPGEARTPSYIMGT) are cytoplasmic. Residues 355 to 375 (TVGICSVIGFLPDVFVYPIIG) traverse the membrane as a helical segment. The Periplasmic portion of the chain corresponds to 376–388 (HWQDTLPAAEAYR). The chain crosses the membrane as a helical span at residues 389 to 409 (NMWLMGMAALGMVIVFTFLLF). Topologically, residues 410–425 (QKIRTADSAPAMASSK) are cytoplasmic.

This sequence to E.coli YihN.

Its subcellular location is the cell inner membrane. The sequence is that of Inner membrane protein YqcE (yqcE) from Escherichia coli (strain K12).